A 184-amino-acid polypeptide reads, in one-letter code: PRKR-interacting protein 1 (184 aa).

Residues 1 to 10 are compositionally biased toward low complexity; sequence MASPAASSVR. Disordered regions lie at residues 1 to 20, 37 to 76, and 120 to 184; these read MASP…EPQT, RLMK…GAGS, and AEEQ…TMGR. The interval 1-50 is interaction with EIF2AK2; sequence MASPAASSVRPPRPKKEPQTLVIPKNAAEEQKLKLERLMKNPDKAVPIPE. The tract at residues 51–143 is required for RNA-binding; it reads KMSEWAPRPP…LKEKKLLAKK (93 aa). Residues 91–152 are a coiled coil; it reads QRQDYMDAMA…KMKLEQKKQE (62 aa). The segment at 126–138 is required for nuclear localization; sequence KRRKKRQKLKEKK. The segment covering 126 to 143 has biased composition (basic residues); sequence KRRKKRQKLKEKKLLAKK. Residues 159–169 are compositionally biased toward low complexity; that stretch reads EQGSSSSAEAS.

This sequence belongs to the PRKRIP1 family. In terms of assembly, component of the pre-catalytic and post-catalytic spliceosome complexes. Interacts with EIF2AK2.

The protein resides in the nucleus. It localises to the nucleolus. Its function is as follows. Required for pre-mRNA splicing as component of the spliceosome. Binds double-stranded RNA. Inhibits EIF2AK2 kinase activity. This chain is PRKR-interacting protein 1 (PRKRIP1), found in Pongo abelii (Sumatran orangutan).